The following is a 325-amino-acid chain: 4-hydroxy-3-methylbut-2-enyl diphosphate reductase (325 aa).

Cys13 provides a ligand contact to [4Fe-4S] cluster. Residues His42 and His76 each coordinate (2E)-4-hydroxy-3-methylbut-2-enyl diphosphate. The dimethylallyl diphosphate site is built by His42 and His76. Isopentenyl diphosphate contacts are provided by His42 and His76. Cys98 is a [4Fe-4S] cluster binding site. Residue His126 participates in (2E)-4-hydroxy-3-methylbut-2-enyl diphosphate binding. His126 provides a ligand contact to dimethylallyl diphosphate. His126 serves as a coordination point for isopentenyl diphosphate. The active-site Proton donor is the Glu128. Thr169 lines the (2E)-4-hydroxy-3-methylbut-2-enyl diphosphate pocket. Cys230 contacts [4Fe-4S] cluster. (2E)-4-hydroxy-3-methylbut-2-enyl diphosphate is bound by residues Ser258, Ser259, Asn260, and Ser306. Positions 258, 259, 260, and 306 each coordinate dimethylallyl diphosphate. Residues Ser258, Ser259, Asn260, and Ser306 each contribute to the isopentenyl diphosphate site.

It belongs to the IspH family. [4Fe-4S] cluster is required as a cofactor.

It catalyses the reaction isopentenyl diphosphate + 2 oxidized [2Fe-2S]-[ferredoxin] + H2O = (2E)-4-hydroxy-3-methylbut-2-enyl diphosphate + 2 reduced [2Fe-2S]-[ferredoxin] + 2 H(+). The catalysed reaction is dimethylallyl diphosphate + 2 oxidized [2Fe-2S]-[ferredoxin] + H2O = (2E)-4-hydroxy-3-methylbut-2-enyl diphosphate + 2 reduced [2Fe-2S]-[ferredoxin] + 2 H(+). It functions in the pathway isoprenoid biosynthesis; dimethylallyl diphosphate biosynthesis; dimethylallyl diphosphate from (2E)-4-hydroxy-3-methylbutenyl diphosphate: step 1/1. Its pathway is isoprenoid biosynthesis; isopentenyl diphosphate biosynthesis via DXP pathway; isopentenyl diphosphate from 1-deoxy-D-xylulose 5-phosphate: step 6/6. Functionally, catalyzes the conversion of 1-hydroxy-2-methyl-2-(E)-butenyl 4-diphosphate (HMBPP) into a mixture of isopentenyl diphosphate (IPP) and dimethylallyl diphosphate (DMAPP). Acts in the terminal step of the DOXP/MEP pathway for isoprenoid precursor biosynthesis. This chain is 4-hydroxy-3-methylbut-2-enyl diphosphate reductase, found in Chlorobium phaeobacteroides (strain BS1).